Reading from the N-terminus, the 412-residue chain is Hyaluronidase-3 (412 aa).

The N-terminal stretch at 1–22 is a signal peptide; it reads MITQLGLTLVVGLTLCLVHVQA. Cystine bridges form between Cys42–Cys332, Cys206–Cys221, Cys357–Cys368, Cys362–Cys396, and Cys398–Cys407. Asn69 carries N-linked (GlcNAc...) asparagine glycosylation. Glu129 acts as the Proton donor in catalysis. N-linked (GlcNAc...) asparagine glycosylation occurs at Asn216. The EGF-like domain occupies 353–408; sequence AATACSHQRCHGHGRCSWKDPGQMEAFLHLQPDDNLGAWKSFRCRCYLGWSGPTCL.

The protein belongs to the glycosyl hydrolase 56 family. Post-translationally, N-glycosylated.

Its subcellular location is the secreted. It is found in the cell membrane. It localises to the cytoplasmic vesicle. The protein localises to the secretory vesicle. The protein resides in the acrosome. Its subcellular location is the endoplasmic reticulum. It is found in the early endosome. It carries out the reaction Random hydrolysis of (1-&gt;4)-linkages between N-acetyl-beta-D-glucosamine and D-glucuronate residues in hyaluronate.. Its function is as follows. Facilitates sperm penetration into the layer of cumulus cells surrounding the egg by digesting hyaluronic acid. Involved in induction of the acrosome reaction in the sperm. Involved in follicular atresia, the breakdown of immature ovarian follicles that are not selected to ovulate. Induces ovarian granulosa cell apoptosis, possibly via apoptotic signaling pathway involving CASP8 and CASP3 activation, and poly(ADP-ribose) polymerase (PARP) cleavage. Has no hyaluronidase activity in embryonic fibroblasts in vitro. Has no hyaluronidase activity in granulosa cells in vitro. This chain is Hyaluronidase-3 (Hyal3), found in Rattus norvegicus (Rat).